An 841-amino-acid chain; its full sequence is Probable outer membrane protein pmp2 (841 aa).

A signal peptide spans 1–24 (MKIPLRFLLISLVPTLSMSNLLGA). The Autotransporter domain occupies 537–841 (GAPYEKRFWV…NVDAGSKIKF (305 aa)).

It belongs to the PMP outer membrane protein family.

The protein localises to the secreted. It is found in the cell wall. Its subcellular location is the cell outer membrane. This chain is Probable outer membrane protein pmp2 (pmp2), found in Chlamydia pneumoniae (Chlamydophila pneumoniae).